The sequence spans 332 residues: tRNA uridine(34) hydroxylase (332 aa).

The region spanning 123 to 217 is the Rhodanese domain; that stretch reads SDPEVLLVDT…YLEEVKQEES (95 aa). The active-site Cysteine persulfide intermediate is cysteine 177. The segment at 302–332 is disordered; sequence SDVGAVIQSRRDNKENLKKSQVKLNNKKYNK. Over residues 310 to 319 the composition is skewed to basic and acidic residues; that stretch reads SRRDNKENLK.

It belongs to the TrhO family.

The catalysed reaction is uridine(34) in tRNA + AH2 + O2 = 5-hydroxyuridine(34) in tRNA + A + H2O. In terms of biological role, catalyzes oxygen-dependent 5-hydroxyuridine (ho5U) modification at position 34 in tRNAs. This is tRNA uridine(34) hydroxylase from Shewanella woodyi (strain ATCC 51908 / MS32).